A 1806-amino-acid polypeptide reads, in one-letter code: MAASEQFASWNPALRSEDHSIPTIENTLDQQPTSPAEQVESQAKTVTPPPQEDSPLQEVPEDVVDTVVPPVSGDTQPIANALDQDQTQPQPEETDRDIPPMIVDTPKDTQETQESVPRNATDEGNVFSLESNDSAFPTTQNAPDLSWAEDSQPQAVERHDDSVWTLHQQSKETPTSPNGDFGTTSHDLWGSPTSPGGEHDFFDQLKTQTKPIYVPPESESRYEEGVPLLDEGVSSPTEPTANQESRIDQIFDGDEDEEGAFFNEVQESASTDESRPYGHMTRKSTSQVLDSLDTSMKSPVSDASPTAREFDNILAAAASGNQVKKSTSEEDLAARWQAELSDEEPEPAPEDDLAARWQAELDDDDDMLLEDETSGELPNQEMHMNGIASQAAPPVLSSPFGTPESAARPKAQPTSYTPHQPSTSDLLQGIPAQGYAQGNTTTAPNYFAPQPPKPATSRAESFAERSKEGYKSPYDLPEDLARPRRAAATHRPVVVPGNNMAPGPPAASVPPPQRAPSMPTPPMATLPSTTTAPPAPPKNFYEELPPPPPKPQSRPSSSGRYTPGPASSHPVLPPPSNPYAAVPPPPTVDSSIPPHLHQPEKTDPYVNLLAPSAPSAPSAPSAASRYSPKPPSLQGGVKPPPSPRYSPAPPPSTAPVPPRNRYASQPSSGPGQTAVLPFQPRTSSPLAYHEKVSYQPQEGLRKPSFAEQESAAGPQNEIQEQPVGHHVGQSVPGGTVVDTQNTGAPMAPQQTSPPRNPYAPPAYVNDFSKRVAPMTSAPPPASAPPATETQFMPPRRSQTQSPSQQVLGPRLSVPAVDPLQRPASVHGSGSPTKSSSPYAPSAPAHNRVASQQLEFIPPTDGQELDPLERWRGAPIVKFGFGGAIVSCFPKHIPRYTAGQPAPKIMAAPGEARIHQLRDWVPIADSIVQHPGPLKNKSKKKDLLAWLSSKIAQFENEGISEAAQLHPESGMRHDEKILLWKIIRILVEHDGTLEGSEPIKKALRGVIFPHLAENPDSSESYGANVPSFGDIKPLDAPSKSDAMDPQAIGNLRNYLLLGDREKAVWSAVDNRLWGHAMVIASTMDKSVWKQVVQEFVRREVRSATGNTESLAALYEIFAGNVEESIDELVPPSARAGMQMISTVDGHGPAKNALDGLNSWRDTLGLVLNNRSPDDHQALLSLGRLLLSYGRVEAAHICFIFSRAAVFGGADDPQSCIVLLGADHQHLPSTILQDEDAFLLTEAYEYATTILAGAPMATLPHLLAFKLLHAWSLADRGRKAEAQQYCDAIAASLKSTTKPSGYHNQHLLFGVDELSARLRQTTNDGGSSWISKPSMEKVSGSMWAKFNSFVAGDDSDAASTGSGKAGEGDVGPFARFTGTPTLSLFLAADPPVTSQITNMPLMHLLNNLADGLRWTPSAHHPMDFPFPQRRGSQEPATPMENTFYQGGGPYGSPPAVGYQSTPPQTSYMPLAPVEEDSATQSYPAASAPPHEPAMNTSPYLPPGGPSSQPLNRGSMMDSQTGASSYMPAETSGSSYTPPTFNTGYEPPTIETTAAPDTQSTDEPADDVPLKKKKSFMDDDDDDDIAARAAALQKAEKERKDREAEENFRRIAEAEAKNAPQQKKSSWWPGWFGGGKKEENNNSGGPIRAKLGEENSFYYDKELKKWVNKKDPNSATVSRGTPPPPRGAAPPSRTASGSSAPPPAASPKPPGPDSRPTSSAGAPPPQTGSPAPSLLGAPPPFLNAVPRSVSTGAAAPPTRPGSSSGPPPRPATSLSTASSIDDLLGPPQARKGGTVKGKKKGRYVDVMAK.

5 disordered regions span residues 1–202 (MAAS…HDFF), 263–305 (NEVQ…DASP), 318–846 (ASGN…PAHN), 1418–1647 (HPMD…IRAK), and 1663–1806 (WVNK…VMAK). Composition is skewed to polar residues over residues 23–45 (TIEN…QAKT), 73–91 (GDTQ…QPQP), 128–154 (SLES…SQPQ), 165–194 (TLHQ…SPTS), and 283–304 (KSTS…SDAS). Composition is skewed to acidic residues over residues 340–352 (LSDE…PEDD) and 360–374 (ELDD…DETS). The segment covering 412–426 (QPTSYTPHQPSTSDL) has biased composition (polar residues). The segment covering 461-470 (SFAERSKEGY) has biased composition (basic and acidic residues). Residues 489–501 (THRPVVVPGNNMA) show a composition bias toward low complexity. 2 stretches are compositionally biased toward pro residues: residues 502-524 (PGPP…PPMA) and 571-587 (VLPP…PPPT). Residues 610–627 (APSAPSAPSAPSAASRYS) show a composition bias toward low complexity. Over residues 638 to 658 (KPPPSPRYSPAPPPSTAPVPP) the composition is skewed to pro residues. 2 stretches are compositionally biased toward polar residues: residues 662–671 (YASQPSSGPG) and 737–753 (VDTQ…QTSP). Low complexity-rich tracts occupy residues 793–805 (PPRR…PSQQ) and 830–844 (SPTK…SAPA). Polar residues-rich tracts occupy residues 1456–1465 (YQSTPPQTSY), 1503–1521 (PSSQ…TGAS), 1528–1540 (TSGS…TFNT), and 1547–1559 (IETT…QSTD). Residues 1591–1613 (KAEKERKDREAEENFRRIAEAEA) are compositionally biased toward basic and acidic residues. Residues 1686–1696 (APPSRTASGSS) are compositionally biased toward low complexity. Residues 1697-1710 (APPPAASPKPPGPD) show a composition bias toward pro residues. The span at 1747 to 1761 (STGAAAPPTRPGSSS) shows a compositional bias: low complexity.

This sequence belongs to the SEC16 family.

It localises to the endoplasmic reticulum membrane. Involved in the initiation of assembly of the COPII coat required for the formation of transport vesicles from the endoplasmic reticulum (ER) and the selection of cargo molecules. Also involved in autophagy. In Aspergillus terreus (strain NIH 2624 / FGSC A1156), this protein is COPII coat assembly protein sec16 (sec16).